A 79-amino-acid chain; its full sequence is DNA-directed RNA polymerase subunit omega (79 aa).

This sequence belongs to the RNA polymerase subunit omega family. The RNAP catalytic core consists of 2 alpha, 1 beta, 1 beta' and 1 omega subunit. When a sigma factor is associated with the core the holoenzyme is formed, which can initiate transcription.

It catalyses the reaction RNA(n) + a ribonucleoside 5'-triphosphate = RNA(n+1) + diphosphate. Functionally, promotes RNA polymerase assembly. Latches the N- and C-terminal regions of the beta' subunit thereby facilitating its interaction with the beta and alpha subunits. The protein is DNA-directed RNA polymerase subunit omega (rpoZ) of Thermotoga maritima (strain ATCC 43589 / DSM 3109 / JCM 10099 / NBRC 100826 / MSB8).